The chain runs to 420 residues: Protein-lysine N-trimethyltransferase SMYD5 (420 aa).

Residues 29–358 (AEARFISSAK…AGEEICISYL (330 aa)) enclose the SET domain. The segment at 104–142 (PEQCSIRKDLHQQCPRCQVTYCSAECRQAALEQYHQVLC) adopts an MYND-type zinc-finger fold. Residue Tyr-357 coordinates S-adenosyl-L-methionine. Residues 392–420 (DDPDVTSDEEEEAEGETDDAELEDEMTDV) are disordered.

It belongs to the class V-like SAM-binding methyltransferase superfamily.

The protein resides in the cytoplasm. It carries out the reaction L-lysyl-[protein] + 3 S-adenosyl-L-methionine = N(6),N(6),N(6)-trimethyl-L-lysyl-[protein] + 3 S-adenosyl-L-homocysteine + 3 H(+). The catalysed reaction is L-lysyl(20)-[histone H4] + 3 S-adenosyl-L-methionine = N(6),N(6),N(6)-trimethyl-L-lysyl(20)-[histone H4] + 3 S-adenosyl-L-homocysteine + 3 H(+). The enzyme catalyses L-lysyl(36)-[histone H3] + 3 S-adenosyl-L-methionine = N(6),N(6),N(6)-trimethyl-L-lysyl(36)-[histone H3] + 3 S-adenosyl-L-homocysteine + 3 H(+). Its function is as follows. Protein-lysine N-trimethyltransferase that specifically catalyzes trimethylation of 'Lys-22' of the RPL40/eL40 subunit of the 60S ribosome, thereby promoting translation elongation and protein synthesis. May also act as a histone methyltransferase in the context of histone octamers, but not on nucleosome substrates: trimethylates 'Lys-36' of histone H3 and 'Lys-20' of histone H4 to form H3K36me3 and H4K20me3, respectively. The histone methyltransferase activity, which is independent of its SET domain, is however unsure in vivo. The polypeptide is Protein-lysine N-trimethyltransferase SMYD5 (SMYD5) (Gallus gallus (Chicken)).